Consider the following 1014-residue polypeptide: Poly [ADP-ribose] polymerase 1 (1014 aa).

Ala2 bears the N-acetylalanine mark. Residues 9 to 93 (YRVEYAKSGR…KVKKTAEAGG (85 aa)) form a PARP-type 1 zinc finger. Zn(2+) contacts are provided by Cys21 and Cys24. At Ser41 the chain carries Phosphoserine. The Zn(2+) site is built by His53 and Cys56. N6-acetyllysine is present on residues Lys97 and Lys105. The PARP-type 2 zinc finger occupies 113 to 203 (FAAEYAKSNR…ALKKQLPGVK (91 aa)). Zn(2+) contacts are provided by Cys125 and Cys128. Lys131 is modified (N6-acetyllysine). His159 and Cys162 together coordinate Zn(2+). Residues Ser177, Ser179, and Ser185 each carry the phosphoserine modification. Residue Lys192 forms a Glycyl lysine isopeptide (Lys-Gly) (interchain with G-Cter in SUMO2) linkage. A disordered region spans residues 198-233 (QLPGVKSEGKRKGDEVDGVDEVAKKKSKKEKDKDSK). Residue Lys203 forms a Glycyl lysine isopeptide (Lys-Gly) (interchain with G-Cter in SUMO1); alternate linkage. Residue Lys203 forms a Glycyl lysine isopeptide (Lys-Gly) (interchain with G-Cter in SUMO2); alternate linkage. Residues 204–233 (SEGKRKGDEVDGVDEVAKKKSKKEKDKDSK) are compositionally biased toward basic and acidic residues. 2 short sequence motifs (nuclear localization signal) span residues 207 to 209 (KRK) and 221 to 226 (KKKSKK). One can recognise a PADR1 zinc-binding domain in the interval 225–359 (KKEKDKDSKL…VKKQDRIFPP (135 aa)). Lys249 is covalently cross-linked (Glycyl lysine isopeptide (Lys-Gly) (interchain with G-Cter in SUMO2)). Phosphoserine is present on residues Ser274 and Ser277. The interval 290–332 (GALLPCEECSGQLVFKSDAYYCTGDVTAWTKCMVKTQTPNRKE) is zinc ribbon. Zn(2+) is bound by residues Cys295, Cys298, Cys311, and Cys321. Residues 361 to 385 (TSASVAATPPPSTASAPAAVNSSAS) are disordered. The residue at position 364 (Ser364) is a Phosphoserine. At Thr368 the chain carries Phosphothreonine. Residues 373–524 (TASAPAAVNS…GINKSEKRMK (152 aa)) are automodification domain. In terms of domain architecture, BRCT spans 385 to 476 (SADKPLSNMK…KSLQELFLAH (92 aa)). A PolyADP-ribosyl aspartic acid modification is found at Asp387. PolyADP-ribosyl glutamic acid is present on residues Glu407, Glu413, Glu435, Glu437, Glu444, Glu445, Glu448, and Glu456. Residue Lys467 forms a Glycyl lysine isopeptide (Lys-Gly) (interchain with G-Cter in SUMO2) linkage. 2 positions are modified to polyADP-ribosyl glutamic acid: Glu471 and Glu484. Residue Lys486 forms a Glycyl lysine isopeptide (Lys-Gly) (interchain with G-Cter in SUMO1); alternate linkage. Lys486 participates in a covalent cross-link: Glycyl lysine isopeptide (Lys-Gly) (interchain with G-Cter in SUMO2); alternate. A polyADP-ribosyl glutamic acid mark is found at Glu488 and Glu491. Residues Ser499, Ser504, and Ser507 each carry the ADP-ribosylserine modification. Residue Lys512 forms a Glycyl lysine isopeptide (Lys-Gly) (interchain with G-Cter in SUMO2) linkage. Residues Glu513 and Glu514 each carry the polyADP-ribosyl glutamic acid modification. The residue at position 519 (Ser519) is an ADP-ribosylserine. PolyADP-ribosyl glutamic acid is present on Glu520. At Lys521 the chain carries N6-(ADP-ribosyl)lysine. Residue Lys528 forms a Glycyl lysine isopeptide (Lys-Gly) (interchain with G-Cter in SUMO2) linkage. The 97-residue stretch at 542–638 (SAHVLEKGGK…KNFTKYPKKF (97 aa)) folds into the WGR domain. A Phosphothreonine; by PRKDC modification is found at Thr594. 2 positions are modified to N6-acetyllysine: Lys600 and Lys621. The 118-residue stretch at 662–779 (KSKLPKPVQD…DIEVAYSLLR (118 aa)) folds into the PARP alpha-helical domain. Lys748 is covalently cross-linked (Glycyl lysine isopeptide (Lys-Gly) (interchain with G-Cter in SUMO1); alternate). A Glycyl lysine isopeptide (Lys-Gly) (interchain with G-Cter in SUMO2); alternate cross-link involves residue Lys748. Ser782 and Ser786 each carry phosphoserine. A PARP catalytic domain is found at 788–1014 (DPIDVNYEKL…LKFNFKTSLW (227 aa)). Residues 862–864 (HGS), Gly871, Arg878, and Ser904 each bind NAD(+). Glu988 (for poly [ADP-ribose] polymerase activity) is an active-site residue.

Belongs to the ARTD/PARP family. As to quaternary structure, homodimer; PARP-type zinc-fingers from separate PARP1 molecules form a dimer module that specifically recognizes DNA strand breaks. Heterodimer; heterodimerizes with PARP2. Interacts (via the PARP catalytic domain) with HPF1. Interacts with NMNAT1. Interacts with nucleosomes; with a preference for nucleosomes containing H2A.X. Interacts with APTX. Component of a base excision repair (BER) complex, containing at least XRCC1, PARP1, PARP2, POLB and LRIG3. Interacts with SRY. The SWAP complex consists of NPM1, NCL, PARP1 and SWAP70. Interacts with TIAM2. Interacts with PARP3; leading to activate PARP1 in absence of DNA. Interacts (when poly-ADP-ribosylated) with CHD1L (via macro domain). Interacts with the DNA polymerase alpha catalytic subunit POLA1; this interaction functions as part of the control of replication fork progression. Interacts with EEF1A1 and TXK. Interacts with RNF4. Interacts with RNF146. Interacts with ZNF423. Interacts with APLF. Interacts with SNAI1 (via zinc fingers); the interaction requires SNAI1 to be poly-ADP-ribosylated and non-phosphorylated (active) by GSK3B. Interacts (when poly-ADP-ribosylated) with PARP9. Interacts with NR4A3; activates PARP1 by improving acetylation of PARP1 and suppressing the interaction between PARP1 and SIRT1. Interacts (via catalytic domain) with PUM3; the interaction inhibits the poly-ADP-ribosylation activity of PARP1 and the degradation of PARP1 by CASP3 following genotoxic stress. Interacts with ZNF365. Interacts with RRP1B. Interacts with TIMELESS; the interaction is direct. Interacts with CGAS; leading to impede the formation of the PARP1-TIMELESS complex. Interacts with KHDC3L, the interaction is increased following the formation of DNA double-strand breaks. Interacts (when auto-poly-ADP-ribosylated) with XRCC1; leading to inhibit PARP1 ADP-ribosyltransferase activity. Interacts with SPINDOC; promoting PARP1 ADP-ribosyltransferase activity. Interacts with BANF1; leading to inhibit PARP1 ADP-ribosyltransferase activity in response to oxidative DNA damage. Interacts (when sumoylated and ubiquitinated) with VCP/p97; leading to its extraction from chromatin. Interacts with YARS1; Interacts with PACMP micropeptide; interaction. Interacts with PACMP micropeptide; Interacts with PACMP micropeptide; interaction. Interacts (when poly-ADP-ribosylated) with isoform 1 of MACROH2A1; MACROH2A1 specifically binds to poly-ADP-ribose chains and inhibits PARP1 activity, limiting the consumption of nuclear NAD(+). Interacts with CARM1; promoting recruitment to replication forks. Interacts with RECQL. Interacts with ZNF32; the interaction reshapes ZNF432 interacting proteins. Interacts with TPRN; TPRN interacts with a number of DNA damage response proteins, is recruited to sites of DNA damage and may play a role in DNA damage repair. In terms of assembly, interacts (when auto-poly-ADP-ribosylated) with AIFM1. (Microbial infection) Interacts with human herpesvirus 8 (KSHV) protein RTA/ORF50; this interaction negatively regulates RTA/ORF50 transactivation activity. Poly-ADP-ribosylated on serine, glutamate and aspartate residues by autocatalysis. Auto-ADP-ribosylation on serine takes place following interaction with HPF1. Auto poly-ADP-ribosylation on serine residues promotes its dissociation from chromatin. Poly-ADP-ribosylated by PARP2; poly-ADP-ribosylation mediates the recruitment of CHD1L to DNA damage sites. Mono-ADP-ribosylated at Lys-521 by SIRT6 in response to oxidative stress, promoting recruitment to double-strand breaks (DSBs) sites. Post-translationally, phosphorylated at Thr-594 by PRKDC in response to DNA damage following virus infection, promoting its translocation to the cytosol. Phosphorylated by TXK. In terms of processing, S-nitrosylated, leading to inhibit transcription regulation activity. Proteolytically cleaved by caspase-3 (CASP3) and caspase-7 (CASP7) in response to apoptosis to generate the Poly [ADP-ribose] polymerase 1, processed N-terminus and Poly [ADP-ribose] polymerase 1, processed C-terminus forms. CASP3-mediated cleavage is promoted by the TP53/p53-induced long non-coding RNA SPARCLE, which binds PARP1 in response to genotoxic stress. Post-translationally, sumoylated with SUMO1 or SUMO2 by PIAS4 following prolonged residence (trapping) to chromatin. Sumoylation promotes ubiquitination by RNF4 and removal from chromatin by VCP/p97. In terms of processing, ubiquitinated by RNF4 following sumoylation by PIAS4 in response to prolonged residence (trapping) to chromatin. Ubiquitination promotes removal from chromatin by VCP/p97.

The protein localises to the chromosome. The protein resides in the nucleus. Its subcellular location is the nucleolus. It is found in the cytoplasm. It localises to the cytosol. It catalyses the reaction NAD(+) + (ADP-D-ribosyl)n-acceptor = nicotinamide + (ADP-D-ribosyl)n+1-acceptor + H(+).. The enzyme catalyses L-seryl-[protein] + NAD(+) = O-(ADP-D-ribosyl)-L-seryl-[protein] + nicotinamide + H(+). It carries out the reaction L-aspartyl-[protein] + NAD(+) = 4-O-(ADP-D-ribosyl)-L-aspartyl-[protein] + nicotinamide. The catalysed reaction is L-glutamyl-[protein] + NAD(+) = 5-O-(ADP-D-ribosyl)-L-glutamyl-[protein] + nicotinamide. It catalyses the reaction L-tyrosyl-[protein] + NAD(+) = O-(ADP-D-ribosyl)-L-tyrosyl-[protein] + nicotinamide + H(+). The enzyme catalyses L-histidyl-[protein] + NAD(+) = N(tele)-(ADP-D-ribosyl)-L-histidyl-[protein] + nicotinamide + H(+). With respect to regulation, ADP-ribosyltransferase activity is regulated via an allosteric activation mechanism. In absence of activation signal, PARP1 is autoinhibited by the PARP alpha-helical domain (also named HD region), which prevents effective NAD(+)-binding. Activity is highly stimulated by signals, such as DNA strand breaks. Binding to damaged DNA unfolds the PARP alpha-helical domain, relieving autoinhibition. Poly-ADP-ribosyltransferase activity is tightly regulated and PARP1 is removed from damaged chromatin following initial poly-ADP-ribosylation of chromatin to avoid prolonged residence (trapping) that has cytotoxic consequences. A number of factors (VCP/p97) or post-translational modifications (auto-poly-ADP-ribosylation or ubiquitination) promote PARP1 removal from chromatin. ADP-ribosyltransferase activity is inhibited by a number of PARP inhibitors (PARPi) compounds, that are used the treatment of breast or ovarian cancers that have defects in DNA repair by homologous recombination. PARPi molecules can be classified in three categories: type I compounds (EB-47, UKTT15 and BAD) that promote allosteric retention of PARP1 on DNA, type II inhibitors (talazoparib and olaparib) that mediate a non-allosteric inhibition, and type III inhibitors (rucaparib, niraparib, and veliparib) that promote allosteric release from DNA. Trapping to chromatin by PARPi molecules triggers activation of the cGAS-STING pathway. Poly-ADP-ribosyltransferase that mediates poly-ADP-ribosylation of proteins and plays a key role in DNA repair. Mediates glutamate, aspartate, serine, histidine or tyrosine ADP-ribosylation of proteins: the ADP-D-ribosyl group of NAD(+) is transferred to the acceptor carboxyl group of target residues and further ADP-ribosyl groups are transferred to the 2'-position of the terminal adenosine moiety, building up a polymer with an average chain length of 20-30 units. Serine ADP-ribosylation of proteins constitutes the primary form of ADP-ribosylation of proteins in response to DNA damage. Specificity for the different amino acids is conferred by interacting factors, such as HPF1 and NMNAT1. Following interaction with HPF1, catalyzes serine ADP-ribosylation of target proteins; HPF1 confers serine specificity by completing the PARP1 active site. Also catalyzes tyrosine ADP-ribosylation of target proteins following interaction with HPF1. Following interaction with NMNAT1, catalyzes glutamate and aspartate ADP-ribosylation of target proteins; NMNAT1 confers glutamate and aspartate specificity. PARP1 initiates the repair of DNA breaks: recognizes and binds DNA breaks within chromatin and recruits HPF1, licensing serine ADP-ribosylation of target proteins, such as histones (H2BS6ADPr and H3S10ADPr), thereby promoting decompaction of chromatin and the recruitment of repair factors leading to the reparation of DNA strand breaks. HPF1 initiates serine ADP-ribosylation but restricts the polymerase activity of PARP1 in order to limit the length of poly-ADP-ribose chains. In addition to base excision repair (BER) pathway, also involved in double-strand breaks (DSBs) repair: together with TIMELESS, accumulates at DNA damage sites and promotes homologous recombination repair by mediating poly-ADP-ribosylation. Mediates the poly-ADP-ribosylation of a number of proteins, including itself, APLF, CHFR, RPA1 and NFAT5. In addition to proteins, also able to ADP-ribosylate DNA: catalyzes ADP-ribosylation of DNA strand break termini containing terminal phosphates and a 2'-OH group in single- and double-stranded DNA, respectively. Required for PARP9 and DTX3L recruitment to DNA damage sites. PARP1-dependent PARP9-DTX3L-mediated ubiquitination promotes the rapid and specific recruitment of 53BP1/TP53BP1, UIMC1/RAP80, and BRCA1 to DNA damage sites. PARP1-mediated DNA repair in neurons plays a role in sleep: senses DNA damage in neurons and promotes sleep, facilitating efficient DNA repair. In addition to DNA repair, also involved in other processes, such as transcription regulation, programmed cell death, membrane repair, adipogenesis and innate immunity. Acts as a repressor of transcription: binds to nucleosomes and modulates chromatin structure in a manner similar to histone H1, thereby altering RNA polymerase II. Acts both as a positive and negative regulator of transcription elongation, depending on the context. Acts as a positive regulator of transcription elongation by mediating poly-ADP-ribosylation of NELFE, preventing RNA-binding activity of NELFE and relieving transcription pausing. Acts as a negative regulator of transcription elongation in response to DNA damage by catalyzing poly-ADP-ribosylation of CCNT1, disrupting the phase separation activity of CCNT1 and subsequent activation of CDK9. Involved in replication fork progression following interaction with CARM1: mediates poly-ADP-ribosylation at replication forks, slowing fork progression. Poly-ADP-ribose chains generated by PARP1 also play a role in poly-ADP-ribose-dependent cell death, a process named parthanatos. Also acts as a negative regulator of the cGAS-STING pathway. Acts by mediating poly-ADP-ribosylation of CGAS: PARP1 translocates into the cytosol following phosphorylation by PRKDC and catalyzes poly-ADP-ribosylation and inactivation of CGAS. Acts as a negative regulator of adipogenesis: catalyzes poly-ADP-ribosylation of histone H2B on 'Glu-35' (H2BE35ADPr) following interaction with NMNAT1, inhibiting phosphorylation of H2B at 'Ser-36' (H2BS36ph), thereby blocking expression of pro-adipogenetic genes. Involved in the synthesis of ATP in the nucleus, together with NMNAT1, PARG and NUDT5. Nuclear ATP generation is required for extensive chromatin remodeling events that are energy-consuming. Functionally, promotes AIFM1-mediated apoptosis. This form, which translocates into the cytoplasm following cleavage by caspase-3 (CASP3) and caspase-7 (CASP7) in response to apoptosis, is auto-poly-ADP-ribosylated and serves as a poly-ADP-ribose carrier to induce AIFM1-mediated apoptosis. Its function is as follows. This cleavage form irreversibly binds to DNA breaks and interferes with DNA repair, promoting DNA damage-induced apoptosis. This is Poly [ADP-ribose] polymerase 1 from Homo sapiens (Human).